Here is a 308-residue protein sequence, read N- to C-terminus: Acetyl-coenzyme A carboxylase carboxyl transferase subunit beta (308 aa).

Residues leucine 46 to alanine 308 enclose the CoA carboxyltransferase N-terminal domain.

Belongs to the AccD/PCCB family. As to quaternary structure, acetyl-CoA carboxylase is a heterohexamer composed of biotin carboxyl carrier protein (AccB), biotin carboxylase (AccC) and two subunits each of ACCase subunit alpha (AccA) and ACCase subunit beta (AccD).

Its subcellular location is the cytoplasm. It catalyses the reaction N(6)-carboxybiotinyl-L-lysyl-[protein] + acetyl-CoA = N(6)-biotinyl-L-lysyl-[protein] + malonyl-CoA. It participates in lipid metabolism; malonyl-CoA biosynthesis; malonyl-CoA from acetyl-CoA: step 1/1. Functionally, component of the acetyl coenzyme A carboxylase (ACC) complex. Biotin carboxylase (BC) catalyzes the carboxylation of biotin on its carrier protein (BCCP) and then the CO(2) group is transferred by the transcarboxylase to acetyl-CoA to form malonyl-CoA. This chain is Acetyl-coenzyme A carboxylase carboxyl transferase subunit beta, found in Caulobacter sp. (strain K31).